Consider the following 467-residue polypeptide: Probable citrate synthase 1, mitochondrial (467 aa).

Active-site residues include H303, H349, and D404.

This sequence belongs to the citrate synthase family. Homodimer.

It localises to the mitochondrion matrix. The catalysed reaction is oxaloacetate + acetyl-CoA + H2O = citrate + CoA + H(+). It functions in the pathway carbohydrate metabolism; tricarboxylic acid cycle; isocitrate from oxaloacetate: step 1/2. This chain is Probable citrate synthase 1, mitochondrial, found in Aedes aegypti (Yellowfever mosquito).